A 29-amino-acid polypeptide reads, in one-letter code: Inorganic pyrophosphatase (29 aa).

It is found in the periplasm. It catalyses the reaction diphosphate + H2O = 2 phosphate + H(+). Inorganic pyrophosphatase is an essential enzyme for the activation of sulfate by sulfate reducing bacteria. This is a high activity pyrophosphatase. The polypeptide is Inorganic pyrophosphatase (Nitratidesulfovibrio vulgaris (strain ATCC 29579 / DSM 644 / CCUG 34227 / NCIMB 8303 / VKM B-1760 / Hildenborough) (Desulfovibrio vulgaris)).